We begin with the raw amino-acid sequence, 425 residues long: Testicular acid phosphatase (425 aa).

The first 27 residues, 1–27 (MAEPGSQGHTVGPLLLLLLLLLPRALP), serve as a signal peptide directing secretion. Residues 28–392 (EGPLLFVALV…EPASPPATVP (365 aa)) lie on the Extracellular side of the membrane. His40 acts as the Nucleophile in catalysis. 3 disulfide bridges follow: Cys158-Cys378, Cys213-Cys311, and Cys353-Cys357. Asp288 serves as the catalytic Proton donor. A helical transmembrane segment spans residues 393-413 (LLAGAVAVLAVLSLGLGLLAW). The Cytoplasmic segment spans residues 414–425 (RPRCLRALGGTV).

This sequence belongs to the histidine acid phosphatase family. In terms of assembly, homodimer. Post-translationally, glycosylated.

Its subcellular location is the membrane. The catalysed reaction is a phosphate monoester + H2O = an alcohol + phosphate. Its function is as follows. May dephosphorylate receptor tyrosine-protein kinase ERBB4 and inhibits its ligand-induced proteolytic cleavage. May play a role in odontogenesis. This Mus musculus (Mouse) protein is Testicular acid phosphatase.